A 647-amino-acid polypeptide reads, in one-letter code: Leucine-rich repeat and WD repeat-containing protein 1 (647 aa).

4 LRR repeats span residues 22 to 43 (KIRSLDLSGLELLSEHLDPKLL), 48 to 69 (QLQELDLSNNHLETLPDNLGLS), 70 to 91 (HLRVLRCANNQLGDVTALCQFP), and 92 to 113 (KLEELSLEGNPFLTVNDNLKVS). Positions 204–267 (RTQVQKANSP…GSPVAGSDGS (64 aa)) are disordered. 5 positions are modified to phosphoserine: Ser-212, Ser-243, Ser-251, Ser-259, and Ser-264. 7 WD repeats span residues 282-335 (HSKN…LHKY), 341-379 (EFFSVAWTALMVVTQAGHKKRWSVLAAAGLRGLVRLLHV), 383-422 (FCCGVIRAHKKAIATLCFSPAHETHLFTASYDKRIILWDI), 426-472 (NQDY…CWDV), 484-526 (EVEF…LWSW), 542-582 (VVLA…LYDV), and 598-646 (APTQ…IWGR).

It belongs to the LRWD1 family. Integral component of the ORC complex. Directly interacts with CDT1, GMNN and ORC2. Interacts with ORC2 only when non-ubiquitinated; this interaction prevents LRWD1 ubiquitination and degradation. Some of these interactions are regulated in a cell-cycle dependent manner. Interaction with ORC1 occurs predominantly during G1. Association with phosphorylated ORC1 during mitosis is not efficient. Interaction with CDT1 occurs during G1 phase, as well as during mitosis with phosphorylated CDT1. Interaction with GMNN occurs from G1/S to mitosis. Interaction with ORC2 is observed throughout the cell cycle. The stoichiometry of the ORCA/ORC/CDT1/GMNN complex is 1:1:1:2. Interacts with CUL4A and DDB1; this interaction may lead to ubiquitination. Post-translationally, ubiquitinated; undergoes 'Lys-48'-linked polyubiquitination leading to proteasomal degradation. Ubiquitination occurs within the WD repeats at the end of the G1 phase. Ubiquitination may be catalyzed by the CUL4-DDB1 E3 ubiquitin-protein ligase complex and other E3 ligases. Testis-specific. Drastically down-regulated in testis from patients with Sertoli cell-only syndrome (SCOS).

The protein localises to the nucleus. The protein resides in the chromosome. Its subcellular location is the centromere. It localises to the telomere. It is found in the cytoplasm. The protein localises to the cytoskeleton. The protein resides in the microtubule organizing center. Its subcellular location is the centrosome. It localises to the kinetochore. In terms of biological role, required for G1/S transition. Recruits and stabilizes the origin recognition complex (ORC) onto chromatin during G1 to establish pre-replication complex (preRC) and to heterochromatic sites in post-replicated cells. Binds a combination of DNA and histone methylation repressive marks on heterochromatin. Binds histone H3 and H4 trimethylation marks H3K9me3, H3K27me3 and H4K20me3 in a cooperative manner with DNA methylation. Required for silencing of major satellite repeats. May be important ORC2, ORC3 and ORC4 stability. This is Leucine-rich repeat and WD repeat-containing protein 1 (LRWD1) from Homo sapiens (Human).